The following is a 366-amino-acid chain: Endophilin-B1 (366 aa).

The segment at 1–30 (MNIMDFNMKKLAADAGTFLSRAVQFTEEKL) is membrane-binding amphipathic helix. The interval 1 to 37 (MNIMDFNMKKLAADAGTFLSRAVQFTEEKLGQAEKTE) is required for membrane binding. Positions 27-261 (EEKLGQAEKT…LGSFPSTFLS (235 aa)) constitute a BAR domain. 2 coiled-coil regions span residues 34 to 54 (EKTE…CTKQ) and 160 to 185 (KERK…AKVA). Residues 306–366 (SGSRKARVLY…VPITYLELLN (61 aa)) form the SH3 domain.

This sequence belongs to the endophilin family. In terms of assembly, homodimer, and heterodimer with SH3GLB2. Binds BAX. Binds DNM1, HTT, AMPH, BIN1 and ARFGAP1.

Its subcellular location is the cytoplasm. It is found in the golgi apparatus membrane. It localises to the mitochondrion outer membrane. In terms of biological role, may be required for normal outer mitochondrial membrane dynamics. Required for coatomer-mediated retrograde transport in certain cells. May recruit other proteins to membranes with high curvature. May promote membrane fusion. The sequence is that of Endophilin-B1 from Gallus gallus (Chicken).